The primary structure comprises 454 residues: Tegument protein VP16 homolog (454 aa).

The protein belongs to the herpesviridae tegument protein VP16 protein family. As to quaternary structure, associates with the VP16-induced complex; binding to host HCFC1 activates VP16 for association with the octamer motif-binding host protein POU2F1, to form a multiprotein-DNA complex responsible for activating transcription of the viral immediate early genes.

The protein resides in the virion tegument. The protein localises to the host nucleus. Functionally, transcriptional activator of immediate-early (IE) gene products (alpha genes). Acts as a key activator of lytic infection by initiating the lytic program through the assembly of the transcriptional regulatory VP16-induced complex composed of VP16 and two cellular factors, HCFC1 and POU2F1. VP16-induced complex represents a regulatory switch: when it is on, it promotes IE-gene expression and thus lytic infection, and when it is off, it limits IE-gene transcription favoring latent infection. Its function is as follows. May play a role in the aggregation of tegument proteins around nucleocapsids during virus morphogenesis. This is Tegument protein VP16 homolog (12) from Equine herpesvirus 4 (strain 1942) (EHV-4).